The sequence spans 543 residues: Carboxypeptidase Y homolog A (543 aa).

The first 17 residues, 1 to 17 (MRVLPATLLVGAATAAA), serve as a signal peptide directing secretion. Positions 18–124 (PPFQQILGLP…KLEAYDLRVK (107 aa)) are excised as a propeptide. 5 disulfides stabilise this stretch: Cys-179/Cys-419, Cys-313/Cys-327, Cys-337/Cys-360, Cys-344/Cys-353, and Cys-382/Cys-389. An N-linked (GlcNAc...) asparagine glycan is attached at Asn-210. Ser-266 is a catalytic residue. The active site involves Asp-458. Asn-509 is a glycosylation site (N-linked (GlcNAc...) asparagine). The active site involves His-520.

This sequence belongs to the peptidase S10 family.

It is found in the vacuole. The catalysed reaction is Release of a C-terminal amino acid with broad specificity.. In terms of biological role, vacuolar carboxypeptidase involved in degradation of small peptides. Digests preferentially peptides containing an aliphatic or hydrophobic residue in P1' position, as well as methionine, leucine or phenylalanine in P1 position of ester substrate. The protein is Carboxypeptidase Y homolog A (cpyA) of Aspergillus fumigatus (strain ATCC MYA-4609 / CBS 101355 / FGSC A1100 / Af293) (Neosartorya fumigata).